The following is a 339-amino-acid chain: Ketol-acid reductoisomerase (NADP(+)) (339 aa).

Residues 1–182 (MRVYYDRDAD…GGGRAGIIET (182 aa)) enclose the KARI N-terminal Rossmann domain. Residues 24–27 (YGSQ), R48, S51, and 83–86 (DEGQ) each bind NADP(+). H108 is an active-site residue. G134 is an NADP(+) binding site. The 146-residue stretch at 183-328 (SFKEEVETDL…EKLRGMMPWI (146 aa)) folds into the KARI C-terminal knotted domain. Mg(2+) is bound by residues D191, E195, E227, and E231. S252 is a binding site for substrate.

The protein belongs to the ketol-acid reductoisomerase family. It depends on Mg(2+) as a cofactor.

The enzyme catalyses (2R)-2,3-dihydroxy-3-methylbutanoate + NADP(+) = (2S)-2-acetolactate + NADPH + H(+). It carries out the reaction (2R,3R)-2,3-dihydroxy-3-methylpentanoate + NADP(+) = (S)-2-ethyl-2-hydroxy-3-oxobutanoate + NADPH + H(+). The protein operates within amino-acid biosynthesis; L-isoleucine biosynthesis; L-isoleucine from 2-oxobutanoate: step 2/4. Its pathway is amino-acid biosynthesis; L-valine biosynthesis; L-valine from pyruvate: step 2/4. Its function is as follows. Involved in the biosynthesis of branched-chain amino acids (BCAA). Catalyzes an alkyl-migration followed by a ketol-acid reduction of (S)-2-acetolactate (S2AL) to yield (R)-2,3-dihydroxy-isovalerate. In the isomerase reaction, S2AL is rearranged via a Mg-dependent methyl migration to produce 3-hydroxy-3-methyl-2-ketobutyrate (HMKB). In the reductase reaction, this 2-ketoacid undergoes a metal-dependent reduction by NADPH to yield (R)-2,3-dihydroxy-isovalerate. The sequence is that of Ketol-acid reductoisomerase (NADP(+)) from Gluconacetobacter diazotrophicus (strain ATCC 49037 / DSM 5601 / CCUG 37298 / CIP 103539 / LMG 7603 / PAl5).